We begin with the raw amino-acid sequence, 172 residues long: Probable metallophosphoesterase MTH_1774 (172 aa).

A divalent metal cation is bound by residues Asp8, His10, Asp37, Asn59, His85, His113, and His115.

Belongs to the metallophosphoesterase superfamily. YfcE family. It depends on a divalent metal cation as a cofactor.

The sequence is that of Probable metallophosphoesterase MTH_1774 from Methanothermobacter thermautotrophicus (strain ATCC 29096 / DSM 1053 / JCM 10044 / NBRC 100330 / Delta H) (Methanobacterium thermoautotrophicum).